The primary structure comprises 369 residues: Histidinol-phosphate aminotransferase 2 (369 aa).

K231 is subject to N6-(pyridoxal phosphate)lysine.

This sequence belongs to the class-II pyridoxal-phosphate-dependent aminotransferase family. Histidinol-phosphate aminotransferase subfamily. As to quaternary structure, homodimer. Pyridoxal 5'-phosphate is required as a cofactor.

The enzyme catalyses L-histidinol phosphate + 2-oxoglutarate = 3-(imidazol-4-yl)-2-oxopropyl phosphate + L-glutamate. The protein operates within amino-acid biosynthesis; L-histidine biosynthesis; L-histidine from 5-phospho-alpha-D-ribose 1-diphosphate: step 7/9. The chain is Histidinol-phosphate aminotransferase 2 from Legionella pneumophila (strain Lens).